A 190-amino-acid chain; its full sequence is Peptide methionine sulfoxide reductase MsrA (190 aa).

The active site involves Cys21.

It belongs to the MsrA Met sulfoxide reductase family.

It carries out the reaction L-methionyl-[protein] + [thioredoxin]-disulfide + H2O = L-methionyl-(S)-S-oxide-[protein] + [thioredoxin]-dithiol. The catalysed reaction is [thioredoxin]-disulfide + L-methionine + H2O = L-methionine (S)-S-oxide + [thioredoxin]-dithiol. Has an important function as a repair enzyme for proteins that have been inactivated by oxidation. Catalyzes the reversible oxidation-reduction of methionine sulfoxide in proteins to methionine. The polypeptide is Peptide methionine sulfoxide reductase MsrA (Polynucleobacter asymbioticus (strain DSM 18221 / CIP 109841 / QLW-P1DMWA-1) (Polynucleobacter necessarius subsp. asymbioticus)).